The sequence spans 253 residues: FSQPFSRPSSRVVNGEDAVPYSWSWQVSLQYEKDGAFHHTCGGSLIAPDWVVTAGHCISTSRTYQVVLGEYDRSVLEGSEQVIPINAGDLFVHPLWNSNCVACGNDIALVKLSRSAQLGDKVQLANLPPAGDILPNEAPCYISGWGRLYTGGPLPDKLQQALLPVVDYEHCSQWDWWGITVKKTMVCAGGDTRSGCNGDSGGPLNCPAADGSWQVHGVTSFVSAFGCNTIKKPTVFTRVSAFIDWIDETIASN.

A propeptide spans 1 to 11 (FSQPFSRPSSR) (activation peptide). The Peptidase S1 domain maps to 12–251 (VVNGEDAVPY…FIDWIDETIA (240 aa)). Intrachain disulfides connect C41-C57, C100-C103, C140-C206, C171-C187, and C196-C227.

The protein belongs to the peptidase S1 family. Monomer. The zymogen is secreted as a ternary complex composed of procarboxypeptidase A, chymotrypsinogen C and proproteinase E. In terms of tissue distribution, pancreas.

The protein resides in the secreted. It is found in the extracellular space. In terms of biological role, may protect procarboxypeptidase A against denaturation in the acidic environment of the ruminant duodenum. In Bos taurus (Bovine), this protein is Proproteinase E.